Reading from the N-terminus, the 306-residue chain is Ribosomal protein L11 methyltransferase (306 aa).

Residues Thr152, Gly179, Asp201, and Asn243 each coordinate S-adenosyl-L-methionine.

Belongs to the methyltransferase superfamily. PrmA family.

The protein resides in the cytoplasm. The enzyme catalyses L-lysyl-[protein] + 3 S-adenosyl-L-methionine = N(6),N(6),N(6)-trimethyl-L-lysyl-[protein] + 3 S-adenosyl-L-homocysteine + 3 H(+). Functionally, methylates ribosomal protein L11. The polypeptide is Ribosomal protein L11 methyltransferase (Citrifermentans bemidjiense (strain ATCC BAA-1014 / DSM 16622 / JCM 12645 / Bem) (Geobacter bemidjiensis)).